The following is a 684-amino-acid chain: Cleavage and polyadenylation specificity factor subunit 3 (684 aa).

The residue at position 2 (S2) is an N-acetylserine. Zn(2+)-binding residues include H71, H73, D75, H76, H158, and D179. The Proton donor role is filled by H396. Zn(2+) is bound at residue H418. Residues K462, K465, and K545 each participate in a glycyl lysine isopeptide (Lys-Gly) (interchain with G-Cter in SUMO) cross-link. A Phosphoserine modification is found at S659. T681 carries the post-translational modification Phosphothreonine.

This sequence belongs to the metallo-beta-lactamase superfamily. RNA-metabolizing metallo-beta-lactamase-like family. CPSF3 subfamily. Component of the cleavage and polyadenylation specificity factor (CPSF) complex, composed of CPSF1, CPSF2, CPSF3, CPSF4 and FIP1L1. Interacts with CPSF2, CSTF2 and SYMPK. Interacts with TUT1; the interaction is direct and mediates the recruitment of the CPSF complex on the 3'UTR of pre-mRNAs. Interacts with WDR33. Interacts with ZC3H3. The cofactor is Zn(2+). Sumoylated on Lys-462, Lys-465 and Lys-545, preferentially by SUMO3.

The protein resides in the nucleus. Its function is as follows. Component of the cleavage and polyadenylation specificity factor (CPSF) complex that plays a key role in pre-mRNA 3'-end formation, recognizing the AAUAAA signal sequence and interacting with poly(A) polymerase and other factors to bring about cleavage and poly(A) addition. Has endonuclease activity, and functions as an mRNA 3'-end-processing endonuclease. Also involved in the histone 3'-end pre-mRNA processing. U7 snRNP-dependent protein that induces both the 3'-endoribonucleolytic cleavage of histone pre-mRNAs and acts as a 5' to 3' exonuclease for degrading the subsequent downstream cleavage product (DCP) of mature histone mRNAs. Cleavage occurs after the 5'-ACCCA-3' sequence in the histone pre-mRNA leaving a 3'hydroxyl group on the upstream fragment containing the stem loop (SL) and 5' phosphate on the downstream cleavage product (DCP) starting with CU nucleotides. The U7-dependent 5' to 3' exonuclease activity is processive and degrades the DCP RNA substrate even after complete removal of the U7-binding site. Binds to the downstream cleavage product (DCP) of histone pre-mRNAs and the cleaved DCP RNA substrate in a U7 snRNP dependent manner. Required for entering/progressing through S-phase of the cell cycle. Required for the selective processing of microRNAs (miRNAs) during embryonic stem cell differentiation via its interaction with ISY1. Required for the biogenesis of all miRNAs from the pri-miR-17-92 primary transcript except miR-92a. Only required for the biogenesis of miR-290 and miR-96 from the pri-miR-290-295 and pri-miR-96-183 primary transcripts, respectively. The protein is Cleavage and polyadenylation specificity factor subunit 3 (CPSF3) of Homo sapiens (Human).